Reading from the N-terminus, the 245-residue chain is Protein-L-isoaspartate O-methyltransferase 1 (245 aa).

Ser-76 is a catalytic residue.

Belongs to the methyltransferase superfamily. L-isoaspartyl/D-aspartyl protein methyltransferase family.

It localises to the cytoplasm. It catalyses the reaction [protein]-L-isoaspartate + S-adenosyl-L-methionine = [protein]-L-isoaspartate alpha-methyl ester + S-adenosyl-L-homocysteine. In terms of biological role, catalyzes the methyl esterification of L-isoaspartyl residues in peptides and proteins that result from spontaneous decomposition of normal L-aspartyl and L-asparaginyl residues. It plays a role in the repair and/or degradation of damaged proteins. The protein is Protein-L-isoaspartate O-methyltransferase 1 of Rhodopseudomonas palustris (strain HaA2).